Here is a 1325-residue protein sequence, read N- to C-terminus: SCAN domain-containing protein 3 (1325 aa).

The SCAN box domain occupies 52 to 134; the sequence is RQRFRQFCYQ…TLLEDLEREL (83 aa). Positions 246 to 275 form a coiled coil; sequence KAKYCQLIKEVKEAKAKAKKESVDYRRLAR. The Integrase catalytic domain occupies 366–526; sequence KSIKEVSSRC…TPCESAFSSE (161 aa). A coiled-coil region spans residues 542–568; sequence ASLHTENELDQADKELENTLRAQYEEN.

As to expression, weakly expressed in the lung (at protein level).

Its subcellular location is the nucleus. In Homo sapiens (Human), this protein is SCAN domain-containing protein 3.